The sequence spans 379 residues: Cytochrome b (379 aa).

4 helical membrane-spanning segments follow: residues 33–53, 77–98, 113–133, and 178–198; these read FGSLLGVCLMIQILTGLFLAM, WLIRYLHANGASMFFICLFIHV, WNIGIILFLTTMATAFVGYVL, and FFAFHFILPFIITAFALVHLL. Heme b contacts are provided by H83 and H97. Residues H182 and H196 each contribute to the heme b site. H201 is an a ubiquinone binding site. The next 4 helical transmembrane spans lie at 226–246, 288–308, 320–340, and 347–367; these read IKDLLGIFLLLLALMILALFF, LGGVLALILSILILAIFPLLN, ITQTIYWTFIANLLVLTWIGG, and FTTIGQIASITYFTXIIILMP.

It belongs to the cytochrome b family. The cytochrome bc1 complex contains 11 subunits: 3 respiratory subunits (MT-CYB, CYC1 and UQCRFS1), 2 core proteins (UQCRC1 and UQCRC2) and 6 low-molecular weight proteins (UQCRH/QCR6, UQCRB/QCR7, UQCRQ/QCR8, UQCR10/QCR9, UQCR11/QCR10 and a cleavage product of UQCRFS1). This cytochrome bc1 complex then forms a dimer. Heme b serves as cofactor.

It is found in the mitochondrion inner membrane. Component of the ubiquinol-cytochrome c reductase complex (complex III or cytochrome b-c1 complex) that is part of the mitochondrial respiratory chain. The b-c1 complex mediates electron transfer from ubiquinol to cytochrome c. Contributes to the generation of a proton gradient across the mitochondrial membrane that is then used for ATP synthesis. This is Cytochrome b (MT-CYB) from Akodon affinis (Colombian grass mouse).